A 423-amino-acid polypeptide reads, in one-letter code: Chitinase 1 (423 aa).

Residues 1-22 (MLSFVKKSIALVAALQAVTALA) form the signal peptide. Residues 23-34 (TPISSEAGVEKR) constitute a propeptide that is removed on maturation. Residues 38–401 (FANAVYFTNW…STSHQGLGSQ (364 aa)) form the GH18 domain. Chitin-binding positions include 102–103 (GT) and 129–132 (GGWT). The active-site Proton donor is Glu-171. Residues Tyr-172, 237–240 (MAYD), and Trp-378 contribute to the chitin site.

This sequence belongs to the glycosyl hydrolase 18 family. Chitinase class V subfamily.

Its subcellular location is the secreted. It catalyses the reaction Random endo-hydrolysis of N-acetyl-beta-D-glucosaminide (1-&gt;4)-beta-linkages in chitin and chitodextrins.. The sequence is that of Chitinase 1 (CHI1) from Aphanocladium album (Wheat rust fungus).